Reading from the N-terminus, the 117-residue chain is Ig heavy chain V region 3 (117 aa).

An N-terminal signal peptide occupies residues 1 to 19 (MGWSCIILFLVATATGVHS). The segment at 20–49 (QVQLQQPGAELVRPGSSVKLSCKASGYTFT) is framework-1. A disulfide bridge connects residues Cys41 and Cys115. The tract at residues 50–54 (SYWMD) is complementarity-determining-1. Residues 55-68 (WVKQRPGQGLEWIG) are framework-2. The interval 69–85 (NIYPSDSETHYNQKFKD) is complementarity-determining-2. The framework-3 stretch occupies residues 86–117 (KATLTVDKSSSTAYMQLSSLTSEDSAVYYCAR).

The protein is Ig heavy chain V region 3 (Ighv1-61) of Mus musculus (Mouse).